The following is a 156-amino-acid chain: UPF0523 protein C (156 aa).

Belongs to the UPF0523 family.

This Dictyostelium discoideum (Social amoeba) protein is UPF0523 protein C.